Consider the following 388-residue polypeptide: Chorismate synthase (388 aa).

Residues arginine 39 and arginine 45 each contribute to the NADP(+) site. The tract at residues 95–118 is disordered; that stretch reads EKNEKSRRVSRPRPGHADLVGGMK. Residues 130–132, 251–252, glycine 296, 311–315, and arginine 337 each bind FMN; these read RSS, NA, and KPIPT.

It belongs to the chorismate synthase family. As to quaternary structure, homotetramer. FMNH2 serves as cofactor.

The catalysed reaction is 5-O-(1-carboxyvinyl)-3-phosphoshikimate = chorismate + phosphate. The protein operates within metabolic intermediate biosynthesis; chorismate biosynthesis; chorismate from D-erythrose 4-phosphate and phosphoenolpyruvate: step 7/7. Catalyzes the anti-1,4-elimination of the C-3 phosphate and the C-6 proR hydrogen from 5-enolpyruvylshikimate-3-phosphate (EPSP) to yield chorismate, which is the branch point compound that serves as the starting substrate for the three terminal pathways of aromatic amino acid biosynthesis. This reaction introduces a second double bond into the aromatic ring system. The polypeptide is Chorismate synthase (Listeria monocytogenes serovar 1/2a (strain ATCC BAA-679 / EGD-e)).